A 331-amino-acid polypeptide reads, in one-letter code: tRNA U34 carboxymethyltransferase (331 aa).

Residues lysine 91, tryptophan 105, lysine 110, glycine 130, 152–154 (DPS), 181–182 (IE), methionine 196, tyrosine 200, and arginine 315 each bind carboxy-S-adenosyl-L-methionine.

Belongs to the class I-like SAM-binding methyltransferase superfamily. CmoB family. In terms of assembly, homotetramer.

The catalysed reaction is carboxy-S-adenosyl-L-methionine + 5-hydroxyuridine(34) in tRNA = 5-carboxymethoxyuridine(34) in tRNA + S-adenosyl-L-homocysteine + H(+). In terms of biological role, catalyzes carboxymethyl transfer from carboxy-S-adenosyl-L-methionine (Cx-SAM) to 5-hydroxyuridine (ho5U) to form 5-carboxymethoxyuridine (cmo5U) at position 34 in tRNAs. In Shewanella baltica (strain OS155 / ATCC BAA-1091), this protein is tRNA U34 carboxymethyltransferase.